A 728-amino-acid chain; its full sequence is Catalase-peroxidase 1 (728 aa).

Residues 1 to 22 (MDKTQSSQGKCPVMHGANSAVA) form the signal peptide. The segment at residues 97–225 (WHSAGTYRVA…LAAVMMGLIY (129 aa)) is a cross-link (tryptophyl-tyrosyl-methioninium (Trp-Tyr) (with M-251)). Histidine 98 acts as the Proton acceptor in catalysis. The tryptophyl-tyrosyl-methioninium (Tyr-Met) (with W-97) cross-link spans 225-251 (YVNPEGVDGKPDPLRTAQDVRVTFARM). Histidine 266 is a heme b binding site.

Belongs to the peroxidase family. Peroxidase/catalase subfamily. As to quaternary structure, homodimer or homotetramer. Heme b is required as a cofactor. In terms of processing, formation of the three residue Trp-Tyr-Met cross-link is important for the catalase, but not the peroxidase activity of the enzyme.

It carries out the reaction H2O2 + AH2 = A + 2 H2O. The enzyme catalyses 2 H2O2 = O2 + 2 H2O. Bifunctional enzyme with both catalase and broad-spectrum peroxidase activity. The chain is Catalase-peroxidase 1 from Shewanella sp. (strain ANA-3).